The chain runs to 664 residues: Protein fem-1 homolog CG6966 (664 aa).

ANK repeat units lie at residues 40 to 70 (NGATPLVISCRNGHYDIVEYLLTKCRANVEQ), 82 to 111 (EDAPPLWCAAAAGHLGIVKMLVRRGANVNS), 115 to 144 (TNSTPLRAACFDGHYEIVKYLVHHGADFEV), 148 to 177 (HGHTCLMIACYKGHFRIAQYLLSLNADVNR), 181 to 210 (KGNTALHDCAESGSLQILQLLLKHGATMDV), and 213 to 242 (YGMTPLLAASVTGHMPIVEHLITLPCVSRE). TPR repeat units follow at residues 245-279 (IHALELLGATYVDRKRDMAAALNLWRRALEERAVE) and 335-368 (SYYIRFRGAHYADAGRFDRCIELWSYALTMQQKI). The tract at residues 433–460 (QQKDQQHPQKQLPAADKSPSCSASSSAS) is disordered. Residues 450–460 (SPSCSASSSAS) show a composition bias toward low complexity. ANK repeat units lie at residues 529–571 (FDRT…DPNA) and 575–605 (AGNTPLHLATMQPYVEPLSHILLEGGAHLDT).

This sequence belongs to the fem-1 family. In terms of assembly, component of a CRL2 E3 ubiquitin-protein ligase complex, also named ECS (Elongin BC-CUL2/5-SOCS-box protein) complex.

It functions in the pathway protein modification; protein ubiquitination. Its function is as follows. Substrate-recognition component of a Cul2-RING (CRL2) E3 ubiquitin-protein ligase complex of the DesCEND (destruction via C-end degrons) pathway, which recognizes a C-degron located at the extreme C terminus of target proteins, leading to their ubiquitination and degradation. The C-degron recognized by the DesCEND pathway is usually a motif of less than ten residues and can be present in full-length proteins, truncated proteins or proteolytically cleaved forms. This chain is Protein fem-1 homolog CG6966, found in Drosophila melanogaster (Fruit fly).